Consider the following 272-residue polypeptide: 1,4-dihydroxy-2-naphthoyl-CoA synthase (272 aa).

Substrate contacts are provided by residues Arg33, 72 to 76, Tyr84, 116 to 120, Thr142, Ser148, Tyr245, and Lys260; these read SGGDQ and YAIGG. 141-143 serves as a coordination point for hydrogencarbonate; the sequence is QTG.

This sequence belongs to the enoyl-CoA hydratase/isomerase family. MenB subfamily. Hydrogencarbonate is required as a cofactor.

It carries out the reaction 2-succinylbenzoyl-CoA + H(+) = 1,4-dihydroxy-2-naphthoyl-CoA + H2O. It participates in quinol/quinone metabolism; 1,4-dihydroxy-2-naphthoate biosynthesis; 1,4-dihydroxy-2-naphthoate from chorismate: step 6/7. The protein operates within quinol/quinone metabolism; menaquinone biosynthesis. Converts o-succinylbenzoyl-CoA (OSB-CoA) to 1,4-dihydroxy-2-naphthoyl-CoA (DHNA-CoA). This chain is 1,4-dihydroxy-2-naphthoyl-CoA synthase, found in Staphylococcus epidermidis (strain ATCC 12228 / FDA PCI 1200).